Here is a 214-residue protein sequence, read N- to C-terminus: rRNA N(6)-adenosine-methyltransferase metl-5 (214 aa).

S-adenosyl-L-methionine contacts are provided by residues Gln-25, Thr-28, Gly-55, Cys-58, Asp-78, and 106-107 (DI).

It belongs to the methyltransferase superfamily. PrmA family. As to quaternary structure, heterodimer; heterodimerizes with TRMT112/C04H5.1.

The enzyme catalyses adenosine in rRNA + S-adenosyl-L-methionine = N(6)-methyladenosine in rRNA + S-adenosyl-L-homocysteine + H(+). Functionally, catalytic subunit of a heterodimer with TRMT112/C04H5.1, which specifically methylates the 6th position of adenine in position 1717 of 18S rRNA. The protein is rRNA N(6)-adenosine-methyltransferase metl-5 of Caenorhabditis elegans.